We begin with the raw amino-acid sequence, 178 residues long: Ribosome maturation factor RimP (178 aa).

It belongs to the RimP family.

The protein localises to the cytoplasm. Required for maturation of 30S ribosomal subunits. The protein is Ribosome maturation factor RimP of Streptococcus pyogenes serotype M3 (strain ATCC BAA-595 / MGAS315).